A 165-amino-acid polypeptide reads, in one-letter code: Protein SprT (165 aa).

The 144-residue stretch at 20-163 folds into the SprT-like domain; that stretch reads EKLTQANLKL…RCVHCGEQLV (144 aa). H78 is a binding site for Zn(2+). The active site involves E79. H82 is a binding site for Zn(2+).

This sequence belongs to the SprT family. Zn(2+) is required as a cofactor.

It localises to the cytoplasm. This chain is Protein SprT, found in Escherichia coli O139:H28 (strain E24377A / ETEC).